Consider the following 901-residue polypeptide: Protein translocase subunit SecA (901 aa).

ATP is bound by residues Gln87, Gly105–Thr109, and Asp512. A disordered region spans residues Gln853–Ser901. Residues Cys885, Cys887, Cys896, and His897 each contribute to the Zn(2+) site. The segment covering Lys891–Ser901 has biased composition (basic residues).

This sequence belongs to the SecA family. In terms of assembly, monomer and homodimer. Part of the essential Sec protein translocation apparatus which comprises SecA, SecYEG and auxiliary proteins SecDF-YajC and YidC. Zn(2+) serves as cofactor.

The protein localises to the cell inner membrane. It localises to the cytoplasm. It carries out the reaction ATP + H2O + cellular proteinSide 1 = ADP + phosphate + cellular proteinSide 2.. In terms of biological role, part of the Sec protein translocase complex. Interacts with the SecYEG preprotein conducting channel. Has a central role in coupling the hydrolysis of ATP to the transfer of proteins into and across the cell membrane, serving both as a receptor for the preprotein-SecB complex and as an ATP-driven molecular motor driving the stepwise translocation of polypeptide chains across the membrane. In Enterobacter sp. (strain 638), this protein is Protein translocase subunit SecA.